Consider the following 361-residue polypeptide: Peptide chain release factor 1 (361 aa).

The residue at position 237 (Gln-237) is an N5-methylglutamine. Residues 287-306 are disordered; sequence KRAAEEASTRKSLVGSGDRS.

Belongs to the prokaryotic/mitochondrial release factor family. Methylated by PrmC. Methylation increases the termination efficiency of RF1.

It localises to the cytoplasm. In terms of biological role, peptide chain release factor 1 directs the termination of translation in response to the peptide chain termination codons UAG and UAA. This is Peptide chain release factor 1 from Alteromonas mediterranea (strain DSM 17117 / CIP 110805 / LMG 28347 / Deep ecotype).